The following is a 334-amino-acid chain: Biotin synthase (334 aa).

The Radical SAM core domain occupies 55–285 (GEGGGVHACS…AHPSKIIKFA (231 aa)). Residues Cys73, Cys77, and Cys80 each contribute to the [4Fe-4S] cluster site. [2Fe-2S] cluster-binding residues include Cys152, Cys213, and Lys283.

Belongs to the radical SAM superfamily. Biotin synthase family. In terms of assembly, homodimer. [4Fe-4S] cluster serves as cofactor. The cofactor is [2Fe-2S] cluster.

The catalysed reaction is (4R,5S)-dethiobiotin + (sulfur carrier)-SH + 2 reduced [2Fe-2S]-[ferredoxin] + 2 S-adenosyl-L-methionine = (sulfur carrier)-H + biotin + 2 5'-deoxyadenosine + 2 L-methionine + 2 oxidized [2Fe-2S]-[ferredoxin]. It participates in cofactor biosynthesis; biotin biosynthesis; biotin from 7,8-diaminononanoate: step 2/2. Functionally, catalyzes the conversion of dethiobiotin (DTB) to biotin by the insertion of a sulfur atom into dethiobiotin via a radical-based mechanism. This is Biotin synthase from Chlorobaculum parvum (strain DSM 263 / NCIMB 8327) (Chlorobium vibrioforme subsp. thiosulfatophilum).